A 209-amino-acid chain; its full sequence is ATP-dependent Clp protease proteolytic subunit (209 aa).

The active-site Nucleophile is Ser-107. His-132 is an active-site residue.

This sequence belongs to the peptidase S14 family. In terms of assembly, fourteen ClpP subunits assemble into 2 heptameric rings which stack back to back to give a disk-like structure with a central cavity, resembling the structure of eukaryotic proteasomes.

Its subcellular location is the cytoplasm. It carries out the reaction Hydrolysis of proteins to small peptides in the presence of ATP and magnesium. alpha-casein is the usual test substrate. In the absence of ATP, only oligopeptides shorter than five residues are hydrolyzed (such as succinyl-Leu-Tyr-|-NHMec, and Leu-Tyr-Leu-|-Tyr-Trp, in which cleavage of the -Tyr-|-Leu- and -Tyr-|-Trp bonds also occurs).. In terms of biological role, cleaves peptides in various proteins in a process that requires ATP hydrolysis. Has a chymotrypsin-like activity. Plays a major role in the degradation of misfolded proteins. The sequence is that of ATP-dependent Clp protease proteolytic subunit from Methylobacterium nodulans (strain LMG 21967 / CNCM I-2342 / ORS 2060).